We begin with the raw amino-acid sequence, 158 residues long: uncharacterized protein (158 aa).

Polar residues predominate over residues 1–21 (MPHTGSQHTLQATPKTAQHTG). Disordered stretches follow at residues 1 to 89 (MPHT…RVEG) and 107 to 158 (EEEK…DAKT). 2 stretches are compositionally biased toward basic and acidic residues: residues 51–68 (HTEG…DKAG) and 107–127 (EEEK…RESR). The span at 128–137 (QGTAHKSTCM) shows a compositional bias: polar residues. Basic and acidic residues predominate over residues 149–158 (EIGKVEDAKT).

This is an uncharacterized protein from Encephalitozoon cuniculi (strain GB-M1) (Microsporidian parasite).